The primary structure comprises 732 residues: 1,4-alpha-glucan branching enzyme GlgB (732 aa).

D412 functions as the Nucleophile in the catalytic mechanism. E465 functions as the Proton donor in the catalytic mechanism.

The protein belongs to the glycosyl hydrolase 13 family. GlgB subfamily. As to quaternary structure, monomer.

The enzyme catalyses Transfers a segment of a (1-&gt;4)-alpha-D-glucan chain to a primary hydroxy group in a similar glucan chain.. Its pathway is glycan biosynthesis; glycogen biosynthesis. Functionally, catalyzes the formation of the alpha-1,6-glucosidic linkages in glycogen by scission of a 1,4-alpha-linked oligosaccharide from growing alpha-1,4-glucan chains and the subsequent attachment of the oligosaccharide to the alpha-1,6 position. The protein is 1,4-alpha-glucan branching enzyme GlgB of Pseudomonas aeruginosa (strain ATCC 15692 / DSM 22644 / CIP 104116 / JCM 14847 / LMG 12228 / 1C / PRS 101 / PAO1).